The primary structure comprises 423 residues: Glycine amidinotransferase, mitochondrial (423 aa).

The N-terminal 43 residues, 1 to 43, are a transit peptide targeting the mitochondrion; sequence MLRVRCLRGGSRGAEAVHYIGSRLGRTLTGWVQRTFQSTQAAT. Residues Ser46 and Ser49 each carry the phosphoserine modification. Residue Asp170 participates in arginine binding. Catalysis depends on residues Asp254 and His303. Positions 305, 322, 354, and 355 each coordinate arginine. Position 385 is an N6-acetyllysine (Lys385). Cys407 functions as the Amidino-cysteine intermediate in the catalytic mechanism.

This sequence belongs to the amidinotransferase family. Homodimer. There is an equilibrium between the monomeric and dimeric forms, shifted towards the side of the monomer. As to expression, expressed in brain, heart, kidney, liver, lung, salivary gland and skeletal muscle tissue, with the highest expression in kidney. Biallelically expressed in placenta and fetal tissues.

It localises to the mitochondrion inner membrane. Its subcellular location is the cytoplasm. The enzyme catalyses L-arginine + glycine = guanidinoacetate + L-ornithine. The catalysed reaction is 4-aminobutanoate + L-arginine = 4-guanidinobutanoate + L-ornithine. It catalyses the reaction beta-alanine + L-arginine = 3-guanidinopropanoate + L-ornithine. It carries out the reaction taurine + L-arginine = taurocyamine + L-ornithine. Its pathway is amine and polyamine biosynthesis; creatine biosynthesis; creatine from L-arginine and glycine: step 1/2. Transamidinase that catalyzes the transfer of the amidino group of L-arginine onto the amino moiety of acceptor metabolites such as glycine, beta-alanine, gamma-aminobutyric acid (GABA) and taurine yielding the corresponding guanidine derivatives. Catalyzes the rate-limiting step of creatine biosynthesis, namely the transfer of the amidino group from L-arginine to glycine to generate guanidinoacetate, which is then methylated by GAMT to form creatine. Provides creatine as a source for ATP generation in tissues with high energy demands, in particular skeletal muscle, heart and brain. The chain is Glycine amidinotransferase, mitochondrial (GATM) from Homo sapiens (Human).